Here is a 327-residue protein sequence, read N- to C-terminus: Glycerol-3-phosphate dehydrogenase [NAD(P)+] (327 aa).

NADPH is bound by residues Trp-11, His-30, and Lys-103. Sn-glycerol 3-phosphate is bound by residues Lys-103, Gly-131, and Ser-133. Residue Ala-135 coordinates NADPH. Sn-glycerol 3-phosphate is bound by residues Lys-186, Asp-243, Ser-253, Arg-254, and Asn-255. The active-site Proton acceptor is Lys-186. Residue Arg-254 participates in NADPH binding. Val-281 and Glu-283 together coordinate NADPH.

It belongs to the NAD-dependent glycerol-3-phosphate dehydrogenase family.

It is found in the cytoplasm. The catalysed reaction is sn-glycerol 3-phosphate + NAD(+) = dihydroxyacetone phosphate + NADH + H(+). The enzyme catalyses sn-glycerol 3-phosphate + NADP(+) = dihydroxyacetone phosphate + NADPH + H(+). It functions in the pathway membrane lipid metabolism; glycerophospholipid metabolism. Catalyzes the reduction of the glycolytic intermediate dihydroxyacetone phosphate (DHAP) to sn-glycerol 3-phosphate (G3P), the key precursor for phospholipid synthesis. This chain is Glycerol-3-phosphate dehydrogenase [NAD(P)+], found in Wolbachia sp. subsp. Brugia malayi (strain TRS).